The chain runs to 135 residues: uncharacterized protein (135 aa).

The tract at residues 1–70 is disordered; it reads MKPDWPRRGA…RWRPQGTGTG (70 aa).

This is an uncharacterized protein from Homo sapiens (Human).